The chain runs to 394 residues: Elongation factor Tu (394 aa).

One can recognise a tr-type G domain in the interval Lys10–Val204. Positions Gly19 to Thr26 are G1. Gly19–Thr26 lines the GTP pocket. Thr26 lines the Mg(2+) pocket. Residues Gly60–Ser64 form a G2 region. Residues Asp81 to Gly84 are G3. GTP contacts are provided by residues Asp81 to His85 and Asn136 to Asp139. The tract at residues Asn136–Asp139 is G4. The interval Ser174–Leu176 is G5.

It belongs to the TRAFAC class translation factor GTPase superfamily. Classic translation factor GTPase family. EF-Tu/EF-1A subfamily. In terms of assembly, monomer.

The protein resides in the cytoplasm. The enzyme catalyses GTP + H2O = GDP + phosphate + H(+). GTP hydrolase that promotes the GTP-dependent binding of aminoacyl-tRNA to the A-site of ribosomes during protein biosynthesis. This Rickettsia parkeri protein is Elongation factor Tu.